A 251-amino-acid chain; its full sequence is ATP synthase subunit a (251 aa).

Helical transmembrane passes span 30–50, 86–106, 116–136, 145–165, 195–215, and 219–239; these read NSNE…VVAL, FFPF…LGLF, IAIT…VGFW, FFSP…IEIV, FMLM…IIPL, and IALT…FAIL.

It belongs to the ATPase A chain family. As to quaternary structure, F-type ATPases have 2 components, CF(1) - the catalytic core - and CF(0) - the membrane proton channel. CF(1) has five subunits: alpha(3), beta(3), gamma(1), delta(1), epsilon(1). CF(0) has three main subunits: a(1), b(2) and c(9-12). The alpha and beta chains form an alternating ring which encloses part of the gamma chain. CF(1) is attached to CF(0) by a central stalk formed by the gamma and epsilon chains, while a peripheral stalk is formed by the delta and b chains.

It is found in the cell inner membrane. In terms of biological role, key component of the proton channel; it plays a direct role in the translocation of protons across the membrane. The protein is ATP synthase subunit a of Acidiphilium cryptum (strain JF-5).